Here is a 36-residue protein sequence, read N- to C-terminus: Potassium channel toxin alpha-KTx 16.1 (36 aa).

Cystine bridges form between cysteine 7/cysteine 28, cysteine 13/cysteine 33, and cysteine 17/cysteine 35.

The protein belongs to the short scorpion toxin superfamily. Potassium channel inhibitor family. Alpha-KTx 16 subfamily. In terms of tissue distribution, expressed by the venom gland.

It is found in the secreted. Blocks calcium-activated potassium channels. This is Potassium channel toxin alpha-KTx 16.1 from Hottentotta tamulus (Eastern Indian scorpion).